The following is a 124-amino-acid chain: Small ribosomal subunit protein uS13 (124 aa).

Residues 99–124 are disordered; sequence PCRGQKTKTNARTCKGPKKTVANKKK. Residues 113–124 are compositionally biased toward basic residues; that stretch reads KGPKKTVANKKK.

This sequence belongs to the universal ribosomal protein uS13 family. As to quaternary structure, part of the 30S ribosomal subunit. Forms a loose heterodimer with protein S19. Forms two bridges to the 50S subunit in the 70S ribosome.

Functionally, located at the top of the head of the 30S subunit, it contacts several helices of the 16S rRNA. In the 70S ribosome it contacts the 23S rRNA (bridge B1a) and protein L5 of the 50S subunit (bridge B1b), connecting the 2 subunits; these bridges are implicated in subunit movement. Contacts the tRNAs in the A and P-sites. In Lachnospira eligens (strain ATCC 27750 / DSM 3376 / VPI C15-48 / C15-B4) (Eubacterium eligens), this protein is Small ribosomal subunit protein uS13.